We begin with the raw amino-acid sequence, 899 residues long: Protein translocase subunit SecA (899 aa).

ATP-binding positions include Gln87, 105-109 (GEGKT), and Asp516. Cys884, Cys886, Cys895, and His896 together coordinate Zn(2+).

It belongs to the SecA family. Monomer and homodimer. Part of the essential Sec protein translocation apparatus which comprises SecA, SecYEG and auxiliary proteins SecDF. Other proteins may also be involved. The cofactor is Zn(2+).

The protein resides in the cell inner membrane. It is found in the cytoplasm. The enzyme catalyses ATP + H2O + cellular proteinSide 1 = ADP + phosphate + cellular proteinSide 2.. Part of the Sec protein translocase complex. Interacts with the SecYEG preprotein conducting channel. Has a central role in coupling the hydrolysis of ATP to the transfer of proteins into and across the cell membrane, serving as an ATP-driven molecular motor driving the stepwise translocation of polypeptide chains across the membrane. The sequence is that of Protein translocase subunit SecA from Borreliella burgdorferi (strain ATCC 35210 / DSM 4680 / CIP 102532 / B31) (Borrelia burgdorferi).